The primary structure comprises 461 residues: TWiK family of potassium channels protein 18 (461 aa).

Residues 1–21 (MAIVAQGVSTILTTFQKTFKG) are Cytoplasmic-facing. The chain crosses the membrane as a helical span at residues 22 to 42 (LLPLIILVAYTLLGAWIFWMI). N-linked (GlcNAc...) asparagine glycosylation occurs at asparagine 88. The pore-forming intramembrane region spans 116–136 (FLGSIFYCMTVYTTIGYGNIV). The helical transmembrane segment at 144–164 (FATILYAFIGIPLTVLSLYCL) threads the bilayer. At 165–224 (GSLFAKGCKMLWRFFLKSTRVVSKDLSNKISEAADNIEEGTTAITPSAEKTENNDDDLLS) the chain is on the cytoplasmic side. A helical membrane pass occupies residues 225-245 (FPISGLLLITVIWVIFCAVLF). Positions 253-273 (FGTSLYFTLISFTTIGFGDIL) form an intramembrane region, pore-forming. The helical transmembrane segment at 281–301 (PIVGVLLLIGLSLVSTVMTLI) threads the bilayer. Over 302–461 (QQQIEALASG…GNEDYLEHDI (160 aa)) the chain is Cytoplasmic. A disordered region spans residues 328–347 (REDGEVDEHVDPEEDPENNK).

It belongs to the two pore domain potassium channel (TC 1.A.1.8) family. Expressed in body wall muscle.

Its subcellular location is the membrane. Outwardly rectifying potassium channel protein; activity is sharply augmented by increase in temperature. This chain is TWiK family of potassium channels protein 18 (twk-18), found in Caenorhabditis elegans.